Reading from the N-terminus, the 259-residue chain is MGHHGQMHAQHGVTMPADSPTGQPDRSEQRYFPATAFRTRRSTLSDAQRQTWDRRWPELGLSVGPAEDPDRPGPPLDTDAWFGRKAPVVLEIGCGNGTSTLAMAKQEPGVDVIAVEVYRRGLAQLLCAIDRDNVTNIRLIRGNALDVLQRLIAPASLTGVRVFFPDPWPKARHHKRRFLQPGTVGLIADRLLPGGVLHVATDHAGYAEHIADVGAGEPRLRPADPDSPLPISVARPTTKYETKAQDAGSAVTEFIWLRR.

The segment at 1 to 74 is disordered; that stretch reads MGHHGQMHAQ…PAEDPDRPGP (74 aa). S-adenosyl-L-methionine contacts are provided by Glu91, Glu116, Asn143, and Asp166. Residue Asp166 is part of the active site. Residues Lys170, Asp202, and 238 to 241 contribute to the substrate site; that span reads TKYE.

The protein belongs to the class I-like SAM-binding methyltransferase superfamily. TrmB family.

It catalyses the reaction guanosine(46) in tRNA + S-adenosyl-L-methionine = N(7)-methylguanosine(46) in tRNA + S-adenosyl-L-homocysteine. It participates in tRNA modification; N(7)-methylguanine-tRNA biosynthesis. Catalyzes the formation of N(7)-methylguanine at position 46 (m7G46) in tRNA. This is tRNA (guanine-N(7)-)-methyltransferase from Mycobacterium avium (strain 104).